The chain runs to 397 residues: Lysophospholipid transporter LplT (397 aa).

11 helical membrane-spanning segments follow: residues 16–36 (MLAV…LLFA), 53–73 (VLQM…GQFA), 91–111 (LGAG…LVGI), 139–159 (LMES…GILA), 164–184 (LAAL…NLWI), 227–247 (LFWG…PVAL), 253–273 (AMPT…AGAA), 281–301 (TVSR…AFAV), 305–325 (LLPA…FIVP), 352–372 (NVAM…GVPP), and 373–393 (VAVG…LWVW).

It belongs to the major facilitator superfamily. LplT (TC 2.A.1.42) family.

Its subcellular location is the cell inner membrane. Catalyzes the facilitated diffusion of 2-acyl-glycero-3-phosphoethanolamine (2-acyl-GPE) into the cell. The protein is Lysophospholipid transporter LplT of Klebsiella pneumoniae (strain 342).